Reading from the N-terminus, the 601-residue chain is Potassium voltage-gated channel subfamily A member 5 (601 aa).

Residues 1-200 are tetramerization domain; sequence MEIALVPLEN…FYQLGDEAME (200 aa). The Cytoplasmic segment spans residues 1-236; sequence MEIALVPLEN…LIFEYPESSG (236 aa). The interval 19–93 is disordered; that stretch reads GGEAGTGCSQ…DEEGEGDPAL (75 aa). Positions 65–74 are enriched in pro residues; the sequence is RPLPPLPQDP. Lys-210 is covalently cross-linked (Glycyl lysine isopeptide (Lys-Gly) (interchain with G-Cter in SUMO)). A helical transmembrane segment spans residues 237-258; it reads SARGIAIVSVLVILISIITFCL. The Extracellular segment spans residues 259–312; the sequence is ETLPEFRDERELLRHPPVPHQPLGPSRGANGSGPLAPPSGPTVAPLLPRTLADP. The segment at 275–297 is disordered; sequence PVPHQPLGPSRGANGSGPLAPPS. Asn-288 is a glycosylation site (N-linked (GlcNAc...) asparagine). Residues 313–334 traverse the membrane as a helical segment; it reads FFIVETTCVIWFTFELLVRFFA. Cys-335 is lipidated: S-palmitoyl cysteine. The Cytoplasmic segment spans residues 335-345; it reads CPSKAEFSRNI. A helical transmembrane segment spans residues 346–366; sequence MNIIDVVAIFPYFITLGTELA. Topologically, residues 367-383 are extracellular; that stretch reads EQPGGGGGGQNGQQAMS. Residues 384–404 form a helical; Voltage-sensor membrane-spanning segment; that stretch reads LAILRVIRLVRVFRIFKLSRH. The Cytoplasmic portion of the chain corresponds to 405–419; it reads SKGLQILGKTLQASM. Residues 406–419 form an S4-S5 linker region; that stretch reads KGLQILGKTLQASM. Residues 420-441 form a helical membrane-spanning segment; that stretch reads RELGLLIFFLFIGVILFSSAVY. The Extracellular portion of the chain corresponds to 442 to 455; sequence FAEADNQETHFSSI. Residues 456-467 constitute an intramembrane region (helical); the sequence is PDAFWWAVVTMT. The Selectivity filter signature appears at 468-473; sequence TVGYGD. Residues 468 to 475 lie within the membrane without spanning it; the sequence is TVGYGDMR. Residues 476–482 are Extracellular-facing; the sequence is PVTVGGK. Residues 483-511 form a helical membrane-spanning segment; the sequence is IVGSLCAIAGVLTIALPVPVIVSNFNYFY. Over 512–601 the chain is Cytoplasmic; sequence HRETDHEEQA…CLDTSRETDL (90 aa). The tract at residues 521 to 545 is disordered; the sequence is AALKEEQGSQSHGTGLDSGGPRKAS. Lys-524 is covalently cross-linked (Glycyl lysine isopeptide (Lys-Gly) (interchain with G-Cter in SUMO)). The PDZ-binding signature appears at 599–601; it reads TDL.

It belongs to the potassium channel family. A (Shaker) (TC 1.A.1.2) subfamily. Kv1.5/KCNA5 sub-subfamily. In terms of assembly, homotetramer and heterotetramer of potassium channel proteins. Interacts with DLG1, which enhances channel currents. Forms a ternary complex with DLG1 and CAV3. Interacts with KCNAB1. Interacts with UBE2I. Interacts with XIRP2; the interaction is required for normal action potential configuration in the heart. Post-translationally, glycosylated. Sumoylated on Lys-210, and Lys-524, preferentially with SUMO3. Sumoylation regulates the voltage sensitivity of the channel.

Its subcellular location is the cell membrane. It carries out the reaction K(+)(in) = K(+)(out). Its function is as follows. Voltage-gated potassium channel that mediates transmembrane potassium transport in excitable membranes. Forms tetrameric potassium-selective channels through which potassium ions pass in accordance with their electrochemical gradient. The channel alternates between opened and closed conformations in response to the voltage difference across the membrane. Can form functional homotetrameric channels and heterotetrameric channels that contain variable proportions of KCNA1, KCNA2, KCNA4, KCNA5, and possibly other family members as well; channel properties depend on the type of alpha subunits that are part of the channel. Channel properties are modulated by cytoplasmic beta subunits that regulate the subcellular location of the alpha subunits and promote rapid inactivation. Homotetrameric channels display rapid activation and slow inactivation. Required for normal electrical conduction including formation of the infranodal ventricular conduction system and normal action potential configuration, as a result of its interaction with XIRP2. May play a role in regulating the secretion of insulin in normal pancreatic islets. The chain is Potassium voltage-gated channel subfamily A member 5 (KCNA5) from Mustela putorius furo (European domestic ferret).